A 384-amino-acid polypeptide reads, in one-letter code: Flap endonuclease 1 (384 aa).

The interval 1–108 (MGIHKLMDLL…GELARRQKAK (108 aa)) is N-domain. Residue Asp34 participates in Mg(2+) binding. Arg74 serves as a coordination point for DNA. Mg(2+)-binding residues include Asp90, Glu162, Glu164, Asp183, and Asp185. The tract at residues 126-254 (EALKQEQRNL…VNAFKLITEH (129 aa)) is I-domain. DNA is bound at residue Glu162. DNA contacts are provided by Gly232 and Asp234. Residue Asp234 participates in Mg(2+) binding. Positions 340–384 (AKEHKGSQTRLNDFFKVQPKDTSSTSKASKKPTNTKSANKKGGKK) are disordered. The interval 346–354 (SQTRLNDFF) is interaction with PCNA. A compositionally biased stretch (low complexity) spans 359-376 (KDTSSTSKASKKPTNTKS).

It belongs to the XPG/RAD2 endonuclease family. FEN1 subfamily. As to quaternary structure, interacts with PCNA. Three molecules of FEN1 bind to one PCNA trimer with each molecule binding to one PCNA monomer. PCNA stimulates the nuclease activity without altering cleavage specificity. Mg(2+) is required as a cofactor. In terms of processing, phosphorylated. Phosphorylation upon DNA damage induces relocalization to the nuclear plasma.

The protein localises to the nucleus. It localises to the nucleolus. Its subcellular location is the nucleoplasm. The protein resides in the mitochondrion. In terms of biological role, structure-specific nuclease with 5'-flap endonuclease and 5'-3' exonuclease activities involved in DNA replication and repair. During DNA replication, cleaves the 5'-overhanging flap structure that is generated by displacement synthesis when DNA polymerase encounters the 5'-end of a downstream Okazaki fragment. It enters the flap from the 5'-end and then tracks to cleave the flap base, leaving a nick for ligation. Also involved in the long patch base excision repair (LP-BER) pathway, by cleaving within the apurinic/apyrimidinic (AP) site-terminated flap. Acts as a genome stabilization factor that prevents flaps from equilibrating into structures that lead to duplications and deletions. Also possesses 5'-3' exonuclease activity on nicked or gapped double-stranded DNA, and exhibits RNase H activity. Also involved in replication and repair of rDNA and in repairing mitochondrial DNA. The chain is Flap endonuclease 1 from Tetrahymena thermophila (strain SB210).